Consider the following 765-residue polypeptide: ATP-dependent RNA helicase DBP4 (765 aa).

The Q motif motif lies at 48-76; it reads SQFSDLPITENTLKGLKEATFVSLTDIQK. One can recognise a Helicase ATP-binding domain in the interval 79 to 253; the sequence is IPIALKGEDL…RLSLTNPNKI (175 aa). Position 92–99 (92–99) interacts with ATP; the sequence is ARTGSGKT. The DEAD box motif lies at 201-204; the sequence is DEAD. The 173-residue stretch at 267–439 folds into the Helicase C-terminal domain; sequence SLEQYYVKVP…SIRPQLQSLC (173 aa). 2 stretches are compositionally biased toward basic and acidic residues: residues 655–668 and 720–738; these read KISD…ERQK and PVSK…KSKN. Residues 655-765 are disordered; that stretch reads KISDITDKEV…ESLTARLIGN (111 aa). Over residues 744–756 the composition is skewed to acidic residues; that stretch reads VEYDEPETLEDLE.

This sequence belongs to the DEAD box helicase family. DDX10/DBP4 subfamily. Interacts with the U3 and U14 snoRNAs. Associates with pre-ribosomal complexes.

The protein resides in the nucleus. The protein localises to the nucleolus. The catalysed reaction is ATP + H2O = ADP + phosphate + H(+). In terms of biological role, ATP-dependent RNA helicase required for ribosome biogenesis. Involved in the release of U14 snoRNA in pre-ribosomal complexes. Required for pre-rRNA cleavage at site A2. The chain is ATP-dependent RNA helicase DBP4 (DBP4) from Candida albicans (strain SC5314 / ATCC MYA-2876) (Yeast).